The sequence spans 290 residues: Short-chain dehydrogenase srdE (290 aa).

Ile11, Thr37, Asp58, and Asn86 together coordinate NADP(+). The chain crosses the membrane as a helical span at residues 125–145 (LIASSGIIVNIGSIGGVVPFV). Tyr150 provides a ligand contact to NADP(+). The active-site Proton donor is Tyr150. Asn151 carries an N-linked (GlcNAc...) asparagine glycan. NADP(+) contacts are provided by Lys154, Val183, and Thr185. Lys154 serves as the catalytic Lowers pKa of active site Tyr.

The protein belongs to the short-chain dehydrogenases/reductases (SDR) family.

The protein resides in the membrane. Functionally, short-chain dehydrogenase; part of the gene cluster that mediates the biosynthesis of sordarial, a salicylic aldehyde structurally related to the phytotoxin pyriculol. The most interesting aspect of this pathway is formation of an aromatic product from the highly reducing polyketide synthase srdA. SrdA synthesizes a reduced polyketide chain from one molecule of acetyl-CoA and five molecules of malonyl-CoA. The polyketide chain is then reductively released as an aldehyde. The oxidoreductases srdC, srdD and srdE then oxidize one of the hydroxy groups to facilitate the intramolecular aldol condensation, followed by dehydration to yield a salicylic aldehyde. This aldehyde can undergo facile reduction by endogenous reductases to yield the alcohol 1-hydroxy-2-hydroxymethyl-3-pent-1,3-dienylbenzene. The flavin-dependent srdI counteract against the propensity of the aldehydes to be reduced under physiological conditions and is responsible for reoxidizing 1-hydroxy-2-hydroxymethyl-3-pent-1,3-dienylbenzene back to the salicylic aldehyde. This salicylic aldehyde is then selectively epoxidized by the cupin-domain-containing oxidoreductase srdB to yield the epoxide, which can be hydrolyzed stereoselectively by the hydrolase srdG to give the final product sordarial. In Neurospora crassa (strain ATCC 24698 / 74-OR23-1A / CBS 708.71 / DSM 1257 / FGSC 987), this protein is Short-chain dehydrogenase srdE.